The chain runs to 234 residues: Endonuclease V (234 aa).

Positions 46 and 116 each coordinate Mg(2+).

Belongs to the endonuclease V family. It depends on Mg(2+) as a cofactor.

It localises to the cytoplasm. It carries out the reaction Endonucleolytic cleavage at apurinic or apyrimidinic sites to products with a 5'-phosphate.. In terms of biological role, DNA repair enzyme involved in the repair of deaminated bases. Selectively cleaves double-stranded DNA at the second phosphodiester bond 3' to a deoxyinosine leaving behind the intact lesion on the nicked DNA. This is Endonuclease V from Clostridium acetobutylicum (strain ATCC 824 / DSM 792 / JCM 1419 / IAM 19013 / LMG 5710 / NBRC 13948 / NRRL B-527 / VKM B-1787 / 2291 / W).